Reading from the N-terminus, the 306-residue chain is Aspartate carbamoyltransferase catalytic subunit (306 aa).

Carbamoyl phosphate-binding residues include arginine 53 and threonine 54. Lysine 82 contributes to the L-aspartate binding site. Positions 103, 131, and 134 each coordinate carbamoyl phosphate. 2 residues coordinate L-aspartate: arginine 164 and arginine 226. Positions 263 and 264 each coordinate carbamoyl phosphate.

The protein belongs to the aspartate/ornithine carbamoyltransferase superfamily. ATCase family. As to quaternary structure, heterododecamer (2C3:3R2) of six catalytic PyrB chains organized as two trimers (C3), and six regulatory PyrI chains organized as three dimers (R2).

It catalyses the reaction carbamoyl phosphate + L-aspartate = N-carbamoyl-L-aspartate + phosphate + H(+). It functions in the pathway pyrimidine metabolism; UMP biosynthesis via de novo pathway; (S)-dihydroorotate from bicarbonate: step 2/3. In terms of biological role, catalyzes the condensation of carbamoyl phosphate and aspartate to form carbamoyl aspartate and inorganic phosphate, the committed step in the de novo pyrimidine nucleotide biosynthesis pathway. This is Aspartate carbamoyltransferase catalytic subunit from Methanocaldococcus jannaschii (strain ATCC 43067 / DSM 2661 / JAL-1 / JCM 10045 / NBRC 100440) (Methanococcus jannaschii).